The sequence spans 150 residues: Small ribosomal subunit protein uS11z (150 aa).

Ser19 is modified (phosphoserine).

It belongs to the universal ribosomal protein uS11 family. Interacts with AAK6.

The protein resides in the cytoplasm. This chain is Small ribosomal subunit protein uS11z (RPS14A), found in Arabidopsis thaliana (Mouse-ear cress).